The chain runs to 715 residues: Polyribonucleotide nucleotidyltransferase (715 aa).

Aspartate 498 and aspartate 504 together coordinate Mg(2+). One can recognise a KH domain in the interval 565 to 625 (PKVCMMQIKP…ETVKKTVAFI (61 aa)). Residues 635 to 706 (GTCYQASILR…DRGRIDFLLL (72 aa)) enclose the S1 motif domain.

This sequence belongs to the polyribonucleotide nucleotidyltransferase family. The cofactor is Mg(2+).

It localises to the cytoplasm. It catalyses the reaction RNA(n+1) + phosphate = RNA(n) + a ribonucleoside 5'-diphosphate. Functionally, involved in mRNA degradation. Catalyzes the phosphorolysis of single-stranded polyribonucleotides processively in the 3'- to 5'-direction. In Onion yellows phytoplasma (strain OY-M), this protein is Polyribonucleotide nucleotidyltransferase.